The primary structure comprises 30 residues: Basic phospholipase A2 CM-I (30 aa).

The protein belongs to the phospholipase A2 family. Group I subfamily. Requires Ca(2+) as cofactor. In terms of tissue distribution, expressed by the venom gland.

Its subcellular location is the secreted. The enzyme catalyses a 1,2-diacyl-sn-glycero-3-phosphocholine + H2O = a 1-acyl-sn-glycero-3-phosphocholine + a fatty acid + H(+). Snake venom phospholipase A2 (PLA2) that shows weak anticoagulant activity. Is more catalytically active than the strong anticoagulant protein CM-IV found in this venom. Acts by inhibiting the complex composed of tissue factor (F3) and coagulation factor VIIa (F7) (TF-VIIa complex) by only enzymatic mechanism. PLA2 catalyzes the calcium-dependent hydrolysis of the 2-acyl groups in 3-sn-phosphoglycerides. This chain is Basic phospholipase A2 CM-I, found in Naja nigricollis (Black-necked spitting cobra).